Here is a 358-residue protein sequence, read N- to C-terminus: Uroporphyrinogen decarboxylase (358 aa).

Residues 27–31 (RQAGR), Asp-77, Tyr-154, Ser-209, and His-327 contribute to the substrate site.

Belongs to the uroporphyrinogen decarboxylase family. In terms of assembly, homodimer.

The protein resides in the cytoplasm. It carries out the reaction uroporphyrinogen III + 4 H(+) = coproporphyrinogen III + 4 CO2. It functions in the pathway porphyrin-containing compound metabolism; protoporphyrin-IX biosynthesis; coproporphyrinogen-III from 5-aminolevulinate: step 4/4. Its function is as follows. Catalyzes the decarboxylation of four acetate groups of uroporphyrinogen-III to yield coproporphyrinogen-III. In Azoarcus sp. (strain BH72), this protein is Uroporphyrinogen decarboxylase.